The following is a 689-amino-acid chain: Ribonuclease J (689 aa).

The disordered stretch occupies residues 1–88 (MTDNNQNNEN…RNYAQEELDS (88 aa)). Residues 9–24 (ENHENSSENSKADEMR) are compositionally biased toward basic and acidic residues. The span at 56–78 (HHKKEHRPNKKPNNHHKQKHAKT) shows a compositional bias: basic residues. Lys-132 and Lys-138 each carry N6-acetyllysine. 6 residues coordinate Zn(2+): His-206, His-208, Asp-210, His-211, His-275, and Asp-297. 3 positions are modified to N6-acetyllysine: Lys-321, Lys-335, and Lys-395. A substrate-binding site is contributed by 498–502 (HVSGH). N6-acetyllysine is present on Lys-509. His-524 contributes to the Zn(2+) binding site. 3 positions are modified to N6-acetyllysine: Lys-545, Lys-632, and Lys-647.

This sequence belongs to the metallo-beta-lactamase superfamily. RNA-metabolizing metallo-beta-lactamase-like family. Bacterial RNase J subfamily. As to quaternary structure, homodimer. Homotetramer; dimer of homodimers. Interacts with RNA helicase RhpA, might be a member of a minimal RNA degradosome complex. Requires Zn(2+) as cofactor. In terms of processing, acetylated on nine lysine residues. Some of the residues are acetylated by multiple different mechanisms. RimL is partially responsible for the acetylation of Lys-321, Lys-395 and Lys-647. HPB8_1270 homolog is partially responsible for the acetylation of Lys-321, Lys-395, Lys-509 and Lys-647. Acetyl-phosphate-mediated non-enzymatic acetylation pathway takes part in the acetylation of Lys-132, Lys-321, Lys-395, Lys-509 and Lys-647. Acetylation of the remaining residues Lys-138, Lys-335, Lys-545 and Lys-632 occurs by a yet undetermined mechanism. Acetylation on a number of these residues is important for growth regulation and proper cell morphology.

It localises to the cytoplasm. With respect to regulation, catalytic activity is regulated by the balance between homodimers and homotetramers, with homotetramers being the active forms of this enzyme. Acetylation allosterically regulates the homooligomerization state and hence the catalytic activity. Its function is as follows. An RNase that has 5'-3' exoribonuclease and endoribonuclease activity. Degrades 5'-monophosphorylated ssRNA and dsRNA, considerably more active on ssRNA. Association with RhpA significantly increases the dsRNase activity. Degrades RNA substrate with hairpin structures at both ends with low activity, but presence of RhpA significantly increases the activity on this substrate. Stimulates ATPase activity of RNA helicase RhpA. Involved in stabilization of mRNA but apparently not rRNA. This chain is Ribonuclease J, found in Helicobacter pylori (strain ATCC 700392 / 26695) (Campylobacter pylori).